We begin with the raw amino-acid sequence, 178 residues long: Probable chorismate pyruvate-lyase (178 aa).

Substrate contacts are provided by Met-37, Arg-78, Leu-114, and Glu-165.

Belongs to the UbiC family.

It is found in the cytoplasm. The catalysed reaction is chorismate = 4-hydroxybenzoate + pyruvate. It functions in the pathway cofactor biosynthesis; ubiquinone biosynthesis. Removes the pyruvyl group from chorismate, with concomitant aromatization of the ring, to provide 4-hydroxybenzoate (4HB) for the ubiquinone pathway. The chain is Probable chorismate pyruvate-lyase from Aeromonas salmonicida (strain A449).